Consider the following 353-residue polypeptide: tRNA-specific 2-thiouridylase MnmA (353 aa).

Residues 7–14 (GLSGGVDS) and L33 each bind ATP. Residue C94 is the Nucleophile of the active site. C94 and C193 are joined by a disulfide. Position 119 (G119) interacts with ATP. The tract at residues 143-145 (KDQ) is interaction with tRNA. C193 acts as the Cysteine persulfide intermediate in catalysis. The segment at 298–299 (RY) is interaction with tRNA.

It belongs to the MnmA/TRMU family.

It localises to the cytoplasm. It carries out the reaction S-sulfanyl-L-cysteinyl-[protein] + uridine(34) in tRNA + AH2 + ATP = 2-thiouridine(34) in tRNA + L-cysteinyl-[protein] + A + AMP + diphosphate + H(+). Functionally, catalyzes the 2-thiolation of uridine at the wobble position (U34) of tRNA, leading to the formation of s(2)U34. This is tRNA-specific 2-thiouridylase MnmA from Picosynechococcus sp. (strain ATCC 27264 / PCC 7002 / PR-6) (Agmenellum quadruplicatum).